A 321-amino-acid chain; its full sequence is Cytochrome c biogenesis protein CcsA (321 aa).

The next 7 membrane-spanning stretches (helical) occupy residues 9–29, 44–64, 68–88, 143–163, 226–246, 260–274, and 289–309; these read ILTH…LITL, GMIA…ASSG, LSNL…LHMI, MLLS…LLMI, VISL…VWAN, TWAF…IYLH, and VASI…LLGI.

The protein belongs to the CcmF/CycK/Ccl1/NrfE/CcsA family. In terms of assembly, may interact with Ccs1.

The protein resides in the plastid. It localises to the chloroplast thylakoid membrane. Functionally, required during biogenesis of c-type cytochromes (cytochrome c6 and cytochrome f) at the step of heme attachment. The protein is Cytochrome c biogenesis protein CcsA of Oryza sativa (Rice).